The following is a 432-amino-acid chain: Cytochrome c biogenesis protein CcsB (432 aa).

The next 3 helical transmembrane spans lie at Leu14–Ile34, Ser72–Arg92, and Val162–Ser182.

The protein belongs to the Ccs1/CcsB family. In terms of assembly, may interact with CcsA.

The protein localises to the cellular thylakoid membrane. Required during biogenesis of c-type cytochromes (cytochrome c6 and cytochrome f) at the step of heme attachment. In Prochlorococcus marinus (strain MIT 9303), this protein is Cytochrome c biogenesis protein CcsB.